The following is a 64-amino-acid chain: DNA-directed RNA polymerase subunit Rpo10 (64 aa).

Positions 7, 10, 45, and 46 each coordinate Zn(2+).

This sequence belongs to the archaeal Rpo10/eukaryotic RPB10 RNA polymerase subunit family. As to quaternary structure, part of the RNA polymerase complex. The cofactor is Zn(2+).

Its subcellular location is the cytoplasm. The catalysed reaction is RNA(n) + a ribonucleoside 5'-triphosphate = RNA(n+1) + diphosphate. DNA-dependent RNA polymerase (RNAP) catalyzes the transcription of DNA into RNA using the four ribonucleoside triphosphates as substrates. This Haloquadratum walsbyi (strain DSM 16790 / HBSQ001) protein is DNA-directed RNA polymerase subunit Rpo10.